A 372-amino-acid polypeptide reads, in one-letter code: Glutamate 5-kinase (372 aa).

Lys9 contacts ATP. The substrate site is built by Ser49, Asp136, and Asn148. Residues 168–169 and 210–216 contribute to the ATP site; these read TD and TGGMKSK. The PUA domain maps to 276 to 360; sequence EGKVFIDDGA…PAIEVIHRDS (85 aa).

Belongs to the glutamate 5-kinase family.

Its subcellular location is the cytoplasm. The catalysed reaction is L-glutamate + ATP = L-glutamyl 5-phosphate + ADP. The protein operates within amino-acid biosynthesis; L-proline biosynthesis; L-glutamate 5-semialdehyde from L-glutamate: step 1/2. Catalyzes the transfer of a phosphate group to glutamate to form L-glutamate 5-phosphate. The protein is Glutamate 5-kinase of Oceanobacillus iheyensis (strain DSM 14371 / CIP 107618 / JCM 11309 / KCTC 3954 / HTE831).